We begin with the raw amino-acid sequence, 293 residues long: Shikimate dehydrogenase (NADP(+)) (293 aa).

Residues 20-22 (SLT) and T72 each bind shikimate. The active-site Proton acceptor is K76. Shikimate-binding residues include N97 and D112. Residues 136–140 (GAGGA) and I230 each bind NADP(+). Residue Y232 coordinates shikimate. An NADP(+)-binding site is contributed by G253.

This sequence belongs to the shikimate dehydrogenase family. Homodimer.

The enzyme catalyses shikimate + NADP(+) = 3-dehydroshikimate + NADPH + H(+). It functions in the pathway metabolic intermediate biosynthesis; chorismate biosynthesis; chorismate from D-erythrose 4-phosphate and phosphoenolpyruvate: step 4/7. In terms of biological role, involved in the biosynthesis of the chorismate, which leads to the biosynthesis of aromatic amino acids. Catalyzes the reversible NADPH linked reduction of 3-dehydroshikimate (DHSA) to yield shikimate (SA). The protein is Shikimate dehydrogenase (NADP(+)) of Arthrobacter sp. (strain FB24).